A 413-amino-acid polypeptide reads, in one-letter code: Serine hydroxymethyltransferase (413 aa).

(6S)-5,6,7,8-tetrahydrofolate contacts are provided by residues leucine 119 and 123 to 125 (GHL). Lysine 228 is subject to N6-(pyridoxal phosphate)lysine.

The protein belongs to the SHMT family. Homodimer. It depends on pyridoxal 5'-phosphate as a cofactor.

Its subcellular location is the cytoplasm. It catalyses the reaction (6R)-5,10-methylene-5,6,7,8-tetrahydrofolate + glycine + H2O = (6S)-5,6,7,8-tetrahydrofolate + L-serine. It functions in the pathway one-carbon metabolism; tetrahydrofolate interconversion. The protein operates within amino-acid biosynthesis; glycine biosynthesis; glycine from L-serine: step 1/1. Its function is as follows. Catalyzes the reversible interconversion of serine and glycine with tetrahydrofolate (THF) serving as the one-carbon carrier. This reaction serves as the major source of one-carbon groups required for the biosynthesis of purines, thymidylate, methionine, and other important biomolecules. Also exhibits THF-independent aldolase activity toward beta-hydroxyamino acids, producing glycine and aldehydes, via a retro-aldol mechanism. The sequence is that of Serine hydroxymethyltransferase from Desulfatibacillum aliphaticivorans.